A 300-amino-acid chain; its full sequence is Ribosomal protein L11 methyltransferase (300 aa).

S-adenosyl-L-methionine contacts are provided by threonine 152, glycine 173, aspartate 195, and asparagine 234.

Belongs to the methyltransferase superfamily. PrmA family.

Its subcellular location is the cytoplasm. The enzyme catalyses L-lysyl-[protein] + 3 S-adenosyl-L-methionine = N(6),N(6),N(6)-trimethyl-L-lysyl-[protein] + 3 S-adenosyl-L-homocysteine + 3 H(+). Methylates ribosomal protein L11. This chain is Ribosomal protein L11 methyltransferase, found in Burkholderia mallei (strain NCTC 10247).